The sequence spans 205 residues: Large ribosomal subunit protein uL4 (205 aa).

A disordered region spans residues 54-78 (GDISGTTAKPHRQKHTGRARQGSLR). Positions 62-71 (KPHRQKHTGR) are enriched in basic residues.

This sequence belongs to the universal ribosomal protein uL4 family. In terms of assembly, part of the 50S ribosomal subunit.

One of the primary rRNA binding proteins, this protein initially binds near the 5'-end of the 23S rRNA. It is important during the early stages of 50S assembly. It makes multiple contacts with different domains of the 23S rRNA in the assembled 50S subunit and ribosome. Functionally, forms part of the polypeptide exit tunnel. The sequence is that of Large ribosomal subunit protein uL4 from Ehrlichia chaffeensis (strain ATCC CRL-10679 / Arkansas).